Reading from the N-terminus, the 176-residue chain is Conidiation-specific protein 8 (176 aa).

Disordered stretches follow at residues 1 to 66 (MDDT…SKLI) and 79 to 162 (AASE…PQGF). Positions 79–99 (AASEAFRSERSASTSSTTSET) are enriched in low complexity.

The chain is Conidiation-specific protein 8 (con-8) from Neurospora crassa (strain ATCC 24698 / 74-OR23-1A / CBS 708.71 / DSM 1257 / FGSC 987).